Here is a 483-residue protein sequence, read N- to C-terminus: ATP-dependent protease ATPase subunit HslU (483 aa).

Residues Val18 and 60–65 (GVGKTE) each bind ATP. Low complexity-rich tracts occupy residues 136–147 (LPGGAPQPAPAQ) and 171–181 (AQADASQASPP). A disordered region spans residues 136 to 212 (LPGGAPQPAP…HGGKLDDREV (77 aa)). The segment covering 182–191 (TGTGSAPDSR) has biased composition (polar residues). Basic and acidic residues predominate over residues 192 to 209 (SSTREKLRTLWHGGKLDD). Positions 296, 361, and 433 each coordinate ATP.

Belongs to the ClpX chaperone family. HslU subfamily. A double ring-shaped homohexamer of HslV is capped on each side by a ring-shaped HslU homohexamer. The assembly of the HslU/HslV complex is dependent on binding of ATP.

The protein localises to the cytoplasm. Functionally, ATPase subunit of a proteasome-like degradation complex; this subunit has chaperone activity. The binding of ATP and its subsequent hydrolysis by HslU are essential for unfolding of protein substrates subsequently hydrolyzed by HslV. HslU recognizes the N-terminal part of its protein substrates and unfolds these before they are guided to HslV for hydrolysis. In Nitratidesulfovibrio vulgaris (strain DSM 19637 / Miyazaki F) (Desulfovibrio vulgaris), this protein is ATP-dependent protease ATPase subunit HslU.